The chain runs to 715 residues: Beta-galactosidase 9 (715 aa).

The signal sequence occupies residues 1 to 20; that stretch reads MSGGAVAFLLLVAAAAVANA. Residue E178 is the Proton donor of the active site. The Nucleophile role is filled by E247.

Belongs to the glycosyl hydrolase 35 family.

It localises to the secreted. The protein localises to the extracellular space. The protein resides in the apoplast. It catalyses the reaction Hydrolysis of terminal non-reducing beta-D-galactose residues in beta-D-galactosides.. This is Beta-galactosidase 9 from Oryza sativa subsp. japonica (Rice).